Here is a 425-residue protein sequence, read N- to C-terminus: MAEPGSQGHTVGPLLLLLLLLLPRALPEGPLLFVALVFRHGDRAPLASYPTDPHKEAASTLWPRGLGQLTKEGIRQQLELGRFLRRRYKAFLSPEYKREEVYIRSTDFDRTLESAQANLAGLFPEAAPGSPETDWKPIPVHTVPVSEDKLLRFPMRSCPRYHELLRESTEAADYQEALEGWTDFLTRLGNFTGLSLVGEPLRRAWKVLDTLICQRAHGLDLPSWASPDVLRTLSQISALDIRAHVGPPRAAEKAQLTGGILLDAILSNFSRTQRLGLPLKMVMYSAHDSTLLALQGALGLYDGNTPPYAACMAFEFRGSSREPEEEDGENVTVSLIYRNDTSRPPLPLRVPGCPAPCPLGRFQQLTAPARPPAHGAPCHGSYEPASPPATVPLLAGAVAVLAVLSLGLGLLAWRPRCLRALGGTV.

The first 27 residues, 1–27, serve as a signal peptide directing secretion; the sequence is MAEPGSQGHTVGPLLLLLLLLLPRALP. At 28 to 392 the chain is on the extracellular side; sequence EGPLLFVALV…EPASPPATVP (365 aa). The Nucleophile role is filled by His-40. 3 disulfide bridges follow: Cys-158–Cys-378, Cys-213–Cys-311, and Cys-353–Cys-357. Asp-288 acts as the Proton donor in catalysis. The chain crosses the membrane as a helical span at residues 393–413; sequence LLAGAVAVLAVLSLGLGLLAW. Topologically, residues 414–425 are cytoplasmic; it reads RPRCLRALGGTV.

Belongs to the histidine acid phosphatase family. In terms of assembly, homodimer. In terms of processing, glycosylated.

It localises to the membrane. It carries out the reaction a phosphate monoester + H2O = an alcohol + phosphate. Functionally, may dephosphorylate receptor tyrosine-protein kinase ERBB4 and inhibits its ligand-induced proteolytic cleavage. May play a role in odontogenesis. This Mus musculus (Mouse) protein is Testicular acid phosphatase.